Reading from the N-terminus, the 124-residue chain is uncharacterized protein (124 aa).

Residues 62–72 (KKNKKQTFLKH) show a composition bias toward basic residues. Positions 62–86 (KKNKKQTFLKHHQSDDHSENKVYKS) are disordered. Residues 73-83 (HQSDDHSENKV) are compositionally biased toward basic and acidic residues. A coiled-coil region spans residues 80–112 (ENKVYKSKKLEKKIQQLNKKKQLIDTKINFLKE).

This is an uncharacterized protein from Dictyostelium discoideum (Social amoeba).